A 621-amino-acid polypeptide reads, in one-letter code: Glutathione-regulated potassium-efflux system protein KefC (621 aa).

12 helical membrane passes run 9 to 29 (ALIY…LGLG), 30 to 50 (SVLG…RLVN), 54 to 74 (AILH…GLEL), 90 to 110 (GALQ…LLGL), 114 to 134 (VAEL…MQAM), 149 to 169 (FAVL…IPLL), 178 to 198 (LMAF…VVVL), 232 to 252 (LLLE…GVLL), 270 to 290 (GLLL…APWS), 296 to 316 (IVIL…LIAQ), 326 to 346 (RWFA…FGPA), and 359 to 379 (ALTL…VLLT). The RCK N-terminal domain occupies 399-518 (QPRVIVAGFG…AGVEAPERET (120 aa)). Positions 598–621 (GWQGTEEGRHTGDIADEPENKPSA) are disordered.

It belongs to the monovalent cation:proton antiporter 2 (CPA2) transporter (TC 2.A.37) family. KefC subfamily. Homodimer. Interacts with the regulatory subunit KefF.

It is found in the cell inner membrane. In terms of biological role, pore-forming subunit of a potassium efflux system that confers protection against electrophiles. Catalyzes K(+)/H(+) antiport. The sequence is that of Glutathione-regulated potassium-efflux system protein KefC from Klebsiella aerogenes (Enterobacter aerogenes).